A 282-amino-acid polypeptide reads, in one-letter code: Putative 4-diphosphocytidyl-2-C-methyl-D-erythritol kinase (282 aa).

Lysine 9 is an active-site residue. 93–103 contacts ATP; the sequence is PVSAGLAGGST. Aspartate 135 is a catalytic residue.

It belongs to the GHMP kinase family. IspE subfamily.

It carries out the reaction 4-CDP-2-C-methyl-D-erythritol + ATP = 4-CDP-2-C-methyl-D-erythritol 2-phosphate + ADP + H(+). Its function is as follows. Catalyzes the phosphorylation of the position 2 hydroxy group of 4-diphosphocytidyl-2C-methyl-D-erythritol. This chain is Putative 4-diphosphocytidyl-2-C-methyl-D-erythritol kinase, found in Staphylococcus saprophyticus subsp. saprophyticus (strain ATCC 15305 / DSM 20229 / NCIMB 8711 / NCTC 7292 / S-41).